Here is a 251-residue protein sequence, read N- to C-terminus: tRNA-cytidine(32) 2-sulfurtransferase 1 (251 aa).

Residues 33–38 carry the PP-loop motif motif; it reads SGGKDS. Cys-108, Cys-111, and Cys-199 together coordinate [4Fe-4S] cluster.

The protein belongs to the TtcA family. Homodimer. The cofactor is Mg(2+). It depends on [4Fe-4S] cluster as a cofactor.

It localises to the cytoplasm. It catalyses the reaction cytidine(32) in tRNA + S-sulfanyl-L-cysteinyl-[cysteine desulfurase] + AH2 + ATP = 2-thiocytidine(32) in tRNA + L-cysteinyl-[cysteine desulfurase] + A + AMP + diphosphate + H(+). It functions in the pathway tRNA modification. Functionally, catalyzes the ATP-dependent 2-thiolation of cytidine in position 32 of tRNA, to form 2-thiocytidine (s(2)C32). The sulfur atoms are provided by the cysteine/cysteine desulfurase (IscS) system. The sequence is that of tRNA-cytidine(32) 2-sulfurtransferase 1 from Francisella tularensis subsp. holarctica (strain FTNF002-00 / FTA).